A 132-amino-acid polypeptide reads, in one-letter code: uncharacterized protein (132 aa).

Positions 1–69 (MNIGEAAKKS…LDEVGKLLTL (69 aa)) constitute an HTH merR-type domain. Residues 4–23 (GEAAKKSGLTPKMIRYYESI) constitute a DNA-binding region (H-T-H motif).

The protein resides in the cytoplasm. This is an uncharacterized protein from Pseudomonas aeruginosa (strain ATCC 15692 / DSM 22644 / CIP 104116 / JCM 14847 / LMG 12228 / 1C / PRS 101 / PAO1).